Here is a 618-residue protein sequence, read N- to C-terminus: DNA mismatch repair protein MutL (618 aa).

Residues 348–359 show a composition bias toward polar residues; sequence QTDTARSPTGNF. Residues 348 to 400 are disordered; it reads QTDTARSPTGNFESGEVFDYPKSQLQPSHSVSSGGASLGSRSAGGSGGAYRAT. Over residues 377–388 the composition is skewed to low complexity; the sequence is SVSSGGASLGSR.

It belongs to the DNA mismatch repair MutL/HexB family.

In terms of biological role, this protein is involved in the repair of mismatches in DNA. It is required for dam-dependent methyl-directed DNA mismatch repair. May act as a 'molecular matchmaker', a protein that promotes the formation of a stable complex between two or more DNA-binding proteins in an ATP-dependent manner without itself being part of a final effector complex. The protein is DNA mismatch repair protein MutL of Pseudoalteromonas translucida (strain TAC 125).